The primary structure comprises 392 residues: Protein O-glucosyltransferase 1 (392 aa).

The first 23 residues, 1-23, serve as a signal peptide directing secretion; it reads MELGVSSQLWLWLLLLLLPPVPG. 4 disulfides stabilise this stretch: cysteine 49-cysteine 56, cysteine 54-cysteine 357, cysteine 102-cysteine 108, and cysteine 263-cysteine 286. N-linked (GlcNAc...) asparagine glycosylation is present at asparagine 53. The segment at 103 to 107 is interaction with the consensus sequence C-X-S-X-[PA]-C in peptide substrates; sequence MFPSR. The active-site Proton donor/acceptor is the aspartate 133. An interaction with the consensus sequence C-X-S-X-[PA]-C in peptide substrates region spans residues 172–178; that stretch reads AVWPIYP. Tyrosine 177 provides a ligand contact to UDP-alpha-D-glucose. N-linked (GlcNAc...) asparagine glycosylation occurs at asparagine 204. UDP-alpha-D-glucose contacts are provided by residues serine 212, arginine 218, and 274 to 279; that span reads VAASFR. Asparagine 373 carries an N-linked (GlcNAc...) asparagine glycan. Residues 389–392 carry the Prevents secretion from ER motif; that stretch reads KIEL.

The protein belongs to the glycosyltransferase 90 family.

The protein resides in the endoplasmic reticulum lumen. The catalysed reaction is L-seryl-[EGF-like domain protein] + UDP-alpha-D-xylose = 3-O-(beta-D-xylosyl)-L-seryl-[EGF-like domain protein] + UDP + H(+). It carries out the reaction L-seryl-[EGF-like domain protein] + UDP-alpha-D-glucose = 3-O-(beta-D-glucosyl)-L-seryl-[EGF-like domain protein] + UDP + H(+). Its pathway is protein modification; protein glycosylation. In terms of biological role, dual specificity glycosyltransferase that catalyzes the transfer of glucose and xylose from UDP-glucose and UDP-xylose, respectively, to a serine residue found in the consensus sequence of C-X-S-X-P-C. Specifically targets extracellular EGF repeats of protein such as CRB2, F7, F9 and NOTCH2. Acts as a positive regulator of Notch signaling by mediating O-glucosylation of Notch, leading to regulate muscle development. Notch glucosylation does not affect Notch ligand binding. Required during early development to promote gastrulation: acts by mediating O-glucosylation of CRB2, which is required for CRB2 localization to the cell membrane. This chain is Protein O-glucosyltransferase 1 (POGLUT1), found in Bos taurus (Bovine).